The sequence spans 43 residues: MQNATLISVFVASLVIGITAYAIFVSFGPSARNLRDPFEEHED.

The chain crosses the membrane as a helical span at residues 5 to 25 (TLISVFVASLVIGITAYAIFV).

This sequence belongs to the PsbN family.

It is found in the plastid. It localises to the chloroplast thylakoid membrane. May play a role in photosystem I and II biogenesis. This Cyanidioschyzon merolae (strain NIES-3377 / 10D) (Unicellular red alga) protein is Protein PsbN.